Consider the following 123-residue polypeptide: Crossover junction endodeoxyribonuclease Hjc (123 aa).

Glu9 contacts Mg(2+). The active site involves Ser29. Positions 33 and 46 each coordinate Mg(2+).

The protein belongs to the Holliday junction resolvase Hjc family. In terms of assembly, homodimer. Probably interacts with PCNA and RadB. Mg(2+) is required as a cofactor. It depends on Mn(2+) as a cofactor.

The catalysed reaction is Endonucleolytic cleavage at a junction such as a reciprocal single-stranded crossover between two homologous DNA duplexes (Holliday junction).. Cleavage inhibited by RadB in the absence (but not presence) of ATP. In terms of biological role, a structure-specific endonuclease that resolves Holliday junction (HJ) intermediates during genetic recombination. Cleaves 4-way DNA junctions introducing paired nicks in opposing strands, leaving a 5'-terminal phosphate and a 3'-terminal hydroxyl group that are subsequently ligated to produce recombinant products. Cleaves both mobile and immobile junctions. Binds 4-way junction DNA, a synthetic Hj, binding is not competed by dsDNA. This chain is Crossover junction endodeoxyribonuclease Hjc, found in Pyrococcus furiosus (strain ATCC 43587 / DSM 3638 / JCM 8422 / Vc1).